The primary structure comprises 568 residues: Proline--tRNA ligase (568 aa).

The protein belongs to the class-II aminoacyl-tRNA synthetase family. ProS type 1 subfamily. Homodimer.

The protein localises to the cytoplasm. It carries out the reaction tRNA(Pro) + L-proline + ATP = L-prolyl-tRNA(Pro) + AMP + diphosphate. Its function is as follows. Catalyzes the attachment of proline to tRNA(Pro) in a two-step reaction: proline is first activated by ATP to form Pro-AMP and then transferred to the acceptor end of tRNA(Pro). As ProRS can inadvertently accommodate and process non-cognate amino acids such as alanine and cysteine, to avoid such errors it has two additional distinct editing activities against alanine. One activity is designated as 'pretransfer' editing and involves the tRNA(Pro)-independent hydrolysis of activated Ala-AMP. The other activity is designated 'posttransfer' editing and involves deacylation of mischarged Ala-tRNA(Pro). The misacylated Cys-tRNA(Pro) is not edited by ProRS. The sequence is that of Proline--tRNA ligase from Listeria welshimeri serovar 6b (strain ATCC 35897 / DSM 20650 / CCUG 15529 / CIP 8149 / NCTC 11857 / SLCC 5334 / V8).